The primary structure comprises 221 residues: Elongation factor Ts (221 aa).

Positions Thr-82–Val-85 are involved in Mg(2+) ion dislocation from EF-Tu.

Belongs to the EF-Ts family.

Its subcellular location is the cytoplasm. In terms of biological role, associates with the EF-Tu.GDP complex and induces the exchange of GDP to GTP. It remains bound to the aminoacyl-tRNA.EF-Tu.GTP complex up to the GTP hydrolysis stage on the ribosome. The chain is Elongation factor Ts from Synechococcus elongatus (strain ATCC 33912 / PCC 7942 / FACHB-805) (Anacystis nidulans R2).